Consider the following 100-residue polypeptide: MMGERIQNCNADEGLITLCILSSLSLLDRNLMSCNSNSSLVANGSCLPPLLIFAVGFPWSKLVLASFSLFKSTSDVFLIVAIVSLFLISSASPEVDCRCG.

2 helical membrane passes run Leu50–Phe70 and Asp75–Val95.

It is found in the membrane. This is an uncharacterized protein from Saccharomyces cerevisiae (strain ATCC 204508 / S288c) (Baker's yeast).